The primary structure comprises 872 residues: F-box protein pof6 (872 aa).

The F-box domain maps to 30–75; sequence FGCLTINIYLKIFTLISTPDLCNCRLVCRKFQQLCDYNSIYVKKLL. The interval 101–122 is disordered; it reads MSSNTSKGFHLQSSDKKYADSD. Residues 113–122 are compositionally biased toward basic and acidic residues; it reads SSDKKYADSD.

As to quaternary structure, interacts with skp1. Forms a complex with pof6 and skp1.

Its subcellular location is the cytoplasm. It is found in the nucleus. Its function is as follows. Together with skp1, essential for septum processing and cell separation. In Schizosaccharomyces pombe (strain 972 / ATCC 24843) (Fission yeast), this protein is F-box protein pof6 (pof6).